The chain runs to 357 residues: Histidinol-phosphate aminotransferase (357 aa).

Position 212 is an N6-(pyridoxal phosphate)lysine (Lys-212).

The protein belongs to the class-II pyridoxal-phosphate-dependent aminotransferase family. Histidinol-phosphate aminotransferase subfamily. Homodimer. The cofactor is pyridoxal 5'-phosphate.

It carries out the reaction L-histidinol phosphate + 2-oxoglutarate = 3-(imidazol-4-yl)-2-oxopropyl phosphate + L-glutamate. It functions in the pathway amino-acid biosynthesis; L-histidine biosynthesis; L-histidine from 5-phospho-alpha-D-ribose 1-diphosphate: step 7/9. The chain is Histidinol-phosphate aminotransferase from Pectobacterium atrosepticum (strain SCRI 1043 / ATCC BAA-672) (Erwinia carotovora subsp. atroseptica).